The following is a 650-amino-acid chain: DNA mismatch repair protein MutL (650 aa).

The segment at 374–420 is disordered; that stretch reads SSLPDTQRSQRQPEKAASGQRSSVDAGLSQGSSAHRASQTGLGQSGN. The segment covering 392-420 has biased composition (polar residues); the sequence is GQRSSVDAGLSQGSSAHRASQTGLGQSGN.

This sequence belongs to the DNA mismatch repair MutL/HexB family.

In terms of biological role, this protein is involved in the repair of mismatches in DNA. It is required for dam-dependent methyl-directed DNA mismatch repair. May act as a 'molecular matchmaker', a protein that promotes the formation of a stable complex between two or more DNA-binding proteins in an ATP-dependent manner without itself being part of a final effector complex. This chain is DNA mismatch repair protein MutL, found in Shewanella amazonensis (strain ATCC BAA-1098 / SB2B).